The chain runs to 128 residues: Gene 64 protein (128 aa).

This chain is Gene 64 protein (64), found in Mycobacterium phage L5 (Mycobacteriophage L5).